The primary structure comprises 158 residues: MKRVEKRAEKQGRGTARKSRRRLARELALQGLYQWCVAGGSAGTIEAQLRDTEEFPKTDEEYFSRLLHGVLMQAPELEKEIQPCLDRPFNELSPVEISILLLGAYELERHPEIPYRAVINEAVELAKAYGGTHGHKYVNGVLDKLAVKLRAAEIGAKI.

Basic and acidic residues predominate over residues 1 to 12; it reads MKRVEKRAEKQG. Residues 1–20 form a disordered region; sequence MKRVEKRAEKQGRGTARKSR.

The protein belongs to the NusB family.

Involved in transcription antitermination. Required for transcription of ribosomal RNA (rRNA) genes. Binds specifically to the boxA antiterminator sequence of the ribosomal RNA (rrn) operons. The protein is Transcription antitermination protein NusB of Nitrosospira multiformis (strain ATCC 25196 / NCIMB 11849 / C 71).